Reading from the N-terminus, the 120-residue chain is Protein RALF-like 1 (120 aa).

An N-terminal signal peptide occupies residues 1–26 (MDKSFTLFLTLTILVVFIISSPPVQA). Residues 27–71 (GFANDLGGVAWATTGDNGSGCHGSIAECIGAEEEEMDSEINRRIL) constitute a propeptide, removed in mature form. Asn43 is a glycosylation site (N-linked (GlcNAc...) asparagine). Intrachain disulfides connect Cys89–Cys99 and Cys112–Cys118.

This sequence belongs to the plant rapid alkalinization factor (RALF) family. As to quaternary structure, interacts with FER and promotes its phosphorylation and subsequent activation. Post-translationally, proteolytically cleaved, probably by S1P, a subtilisin-like serine protease (subtilase). In terms of tissue distribution, expressed in roots and stems.

It localises to the secreted. Functionally, cell signaling peptide that may regulate plant stress, growth, and development. Mediates a rapid alkalinization of extracellular space by mediating a transient increase in the cytoplasmic Ca(2+) concentration leading to a calcium-dependent signaling events through a cell surface receptor and a concomitant activation of some intracellular mitogen-activated protein kinases. Mostly active in roots. Prevents plant growth (e.g. root and leaf length). Suppresses cell elongation of the primary root by activating the cell surface receptor FER and triggering phosphorylation of AHA2 and subsequent extracellular alkalinization. The polypeptide is Protein RALF-like 1 (RALF1) (Arabidopsis thaliana (Mouse-ear cress)).